The primary structure comprises 112 residues: Histone H2B (112 aa).

Residues 1–24 (MATPKSSSANRKKGGKKSHRKPKR) are disordered. The span at 10–24 (NRKKGGKKSHRKPKR) shows a compositional bias: basic residues.

It belongs to the histone H2B family. In terms of assembly, the nucleosome is a histone octamer containing two molecules each of H2A, H2B, H3 and H4 assembled in one H3-H4 heterotetramer and two H2A-H2B heterodimers. The octamer wraps approximately 147 bp of DNA.

The protein resides in the nucleus. It is found in the chromosome. Its function is as follows. Core component of nucleosome. Nucleosomes wrap and compact DNA into chromatin, limiting DNA accessibility to the cellular machineries which require DNA as a template. Histones thereby play a central role in transcription regulation, DNA repair, DNA replication and chromosomal stability. DNA accessibility is regulated via a complex set of post-translational modifications of histones, also called histone code, and nucleosome remodeling. The sequence is that of Histone H2B from Trypanosoma cruzi.